Consider the following 140-residue polypeptide: Protein BIC1 (140 aa).

The segment covering 1–10 (MMNIDDTTSP) has biased composition (polar residues). The interval 1-71 (MMNIDDTTSP…RVDTGRERLK (71 aa)) is disordered. Positions 42–68 (ADKKDLALLEEKPKQSQEEDRVDTGRE) are enriched in basic and acidic residues.

In terms of assembly, interacts with CRY2 in both darkness and light.

It localises to the nucleus. Its function is as follows. Regulates the blue-light dependent dimerization of CRY2 and formation of photobodies. Interacts with photoexited CRY2 to inhibit its activity. Inhibits CRY phosphorylation. This is Protein BIC1 from Arabidopsis thaliana (Mouse-ear cress).